The following is a 245-amino-acid chain: 8-amino-3,8-dideoxy-manno-octulosonate cytidylyltransferase (245 aa).

It belongs to the KdsB family.

The protein localises to the cytoplasm. The enzyme catalyses 8-amino-3,8-dideoxy-alpha-D-manno-octulosonate + CTP = CMP-8-amino-3,8-dideoxy-alpha-D-manno-oct-2-ulosonate + diphosphate. Its pathway is bacterial outer membrane biogenesis; lipopolysaccharide biosynthesis. Its function is as follows. Activates KDO8N (a required 8-carbon sugar) for incorporation into bacterial lipopolysaccharide in the Shewanella genus. This is 8-amino-3,8-dideoxy-manno-octulosonate cytidylyltransferase from Shewanella sp. (strain W3-18-1).